The sequence spans 352 residues: (2E,6E)-farnesyl diphosphate synthase (352 aa).

Residues Lys-43, Arg-46, and His-77 each contribute to the isopentenyl diphosphate site. Mg(2+) is bound by residues Asp-84 and Asp-88. The DDXXD motif motif lies at 84–88 (DDLID). Arg-94 provides a ligand contact to isopentenyl diphosphate. The DDXXD motif motif lies at 236–240 (DDVLG).

The protein belongs to the FPP/GGPP synthase family. Requires Mg(2+) as cofactor.

It catalyses the reaction isopentenyl diphosphate + dimethylallyl diphosphate = (2E)-geranyl diphosphate + diphosphate. The enzyme catalyses isopentenyl diphosphate + (2E)-geranyl diphosphate = (2E,6E)-farnesyl diphosphate + diphosphate. It participates in isoprenoid biosynthesis; geranyl diphosphate biosynthesis; geranyl diphosphate from dimethylallyl diphosphate and isopentenyl diphosphate: step 1/1. Its pathway is isoprenoid biosynthesis; farnesyl diphosphate biosynthesis; farnesyl diphosphate from geranyl diphosphate and isopentenyl diphosphate. Functionally, catalyzes the sequential condensations of isopentenyl pyrophosphate (IPP) with dimethylallyl diphosphate (DMAPP) to yield geranyl diphosphate (GPP) and with GPP to yield (2E,6E)-farnesyl diphosphate (E,E-FPP). The chain is (2E,6E)-farnesyl diphosphate synthase from Mycobacterium tuberculosis (strain ATCC 25618 / H37Rv).